The primary structure comprises 3589 residues: D-lysergyl-peptide-synthetase subunit 1 (3589 aa).

The tract at residues 344-742 (NCHSRPDSLA…IGRKDLQVKV (399 aa)) is adenylation (A) domain 1. In terms of domain architecture, Carrier 1 spans 883-952 (VERRLQLLFA…KLRDLAAASS (70 aa)). The residue at position 915 (Ser-915) is an O-(pantetheine 4'-phosphoryl)serine. The condensation (C) domain 1 stretch occupies residues 995-1380 (EDIYPCTSLQ…SQFQHILTQI (386 aa)). The adenylation (A) domain 2 stretch occupies residues 1424–1826 (QAKAQMQPEA…RRKDSQVKLR (403 aa)). The Carrier 2 domain occupies 1974–2042 (LERELQKIWA…TIEKLAAAAV (69 aa)). Ser-2006 is modified (O-(pantetheine 4'-phosphoryl)serine). Residues 2087–2509 (VEDIYPCSPI…IEMLDEEHRS (423 aa)) form a condensation (C) domain 2 region. The tract at residues 2534-2929 (CLESPESPAI…GRKDDQVKIR (396 aa)) is adenylation (A) domain 3. Residues 3064-3132 (LETRLQELVG…RLSELAVVLN (69 aa)) enclose the Carrier 3 domain. The residue at position 3096 (Ser-3096) is an O-(pantetheine 4'-phosphoryl)serine. Residues 3187–3585 (TNFIALHFSQ…TYPESLVSEL (399 aa)) form a cyclization (Cyc) domain region.

The protein belongs to the NRP synthetase family.

It participates in alkaloid biosynthesis; ergot alkaloid biosynthesis. In terms of biological role, D-lysergyl-peptide-synthetase subunit 1; part of the gene cluster that mediates the biosynthesis of fungal ergot alkaloid ergovaline, the predominant ergopeptine product in E.festucae var. lolii. DmaW catalyzes the first step of ergot alkaloid biosynthesis by condensing dimethylallyl diphosphate (DMAP) and tryptophan to form 4-dimethylallyl-L-tryptophan. The second step is catalyzed by the methyltransferase easF that methylates 4-dimethylallyl-L-tryptophan in the presence of S-adenosyl-L-methionine, resulting in the formation of 4-dimethylallyl-L-abrine. The catalase easC and the FAD-dependent oxidoreductase easE then transform 4-dimethylallyl-L-abrine to chanoclavine-I which is further oxidized by easD in the presence of NAD(+), resulting in the formation of chanoclavine-I aldehyde. Agroclavine dehydrogenase easG then mediates the conversion of chanoclavine-I aldehyde to agroclavine via a non-enzymatic adduct reaction: the substrate is an iminium intermediate that is formed spontaneously from chanoclavine-I aldehyde in the presence of glutathione. The presence of easA is not required to complete this reaction. Further conversion of agroclavine to paspalic acid is a two-step process involving oxidation of agroclavine to elymoclavine and of elymoclavine to paspalic acid, the second step being performed by the elymoclavine oxidase cloA. Paspalic acid is then further converted to D-lysergic acid. Ergovaline is assembled from D-lysergic acid and three different amino acids by the D-lysergyl-peptide-synthetase composed of a monomudular (lpsB) and a trimodular (lpsA) nonribosomal peptide synthetase subunit. The sequence is that of D-lysergyl-peptide-synthetase subunit 1 from Epichloe festucae var. lolii (Neotyphodium lolii).